The sequence spans 84 residues: Acyl carrier protein (84 aa).

The Carrier domain occupies 6–81; that stretch reads EEILTGLAEI…DAVDYIANAT (76 aa). An O-(pantetheine 4'-phosphoryl)serine modification is found at serine 41.

Belongs to the acyl carrier protein (ACP) family. Post-translationally, 4'-phosphopantetheine is transferred from CoA to a specific serine of apo-ACP by AcpS. This modification is essential for activity because fatty acids are bound in thioester linkage to the sulfhydryl of the prosthetic group.

It localises to the cytoplasm. It participates in lipid metabolism; fatty acid biosynthesis. Functionally, carrier of the growing fatty acid chain in fatty acid biosynthesis. The chain is Acyl carrier protein from Acidothermus cellulolyticus (strain ATCC 43068 / DSM 8971 / 11B).